We begin with the raw amino-acid sequence, 24 residues long: Caerulein precursor fragment B4 (24 aa).

As to expression, expressed by the skin glands.

Its subcellular location is the secreted. Has antibacterial and antifungal activity. In Xenopus borealis (Kenyan clawed frog), this protein is Caerulein precursor fragment B4.